The chain runs to 326 residues: uncharacterized protein (326 aa).

2 consecutive transmembrane segments (helical) span residues 9-29 (WVVL…RWSL) and 33-53 (ISIC…ANSY). Positions 120, 148, 214, 218, and 252 each coordinate NADP(+). Tyrosine 214 serves as the catalytic Proton acceptor. Catalysis depends on lysine 218, which acts as the Lowers pKa of active site Tyr.

This sequence belongs to the short-chain dehydrogenases/reductases (SDR) family.

It localises to the mitochondrion membrane. Involved in the resistance to DNA-damaging agents. This is an uncharacterized protein from Saccharomyces cerevisiae (strain ATCC 204508 / S288c) (Baker's yeast).